A 430-amino-acid chain; its full sequence is Tol-Pal system protein TolB (430 aa).

Residues 1–21 (MKQAFRLMVGLLVLWASVLHA) form the signal peptide.

This sequence belongs to the TolB family. In terms of assembly, the Tol-Pal system is composed of five core proteins: the inner membrane proteins TolA, TolQ and TolR, the periplasmic protein TolB and the outer membrane protein Pal. They form a network linking the inner and outer membranes and the peptidoglycan layer.

It localises to the periplasm. In terms of biological role, part of the Tol-Pal system, which plays a role in outer membrane invagination during cell division and is important for maintaining outer membrane integrity. TolB occupies a key intermediary position in the Tol-Pal system because it communicates directly with both membrane-embedded components, Pal in the outer membrane and TolA in the inner membrane. The sequence is that of Tol-Pal system protein TolB from Edwardsiella ictaluri (strain 93-146).